The chain runs to 103 residues: Large ribosomal subunit protein uL23 (103 aa).

It belongs to the universal ribosomal protein uL23 family. Part of the 50S ribosomal subunit. Contacts protein L29, and trigger factor when it is bound to the ribosome.

In terms of biological role, one of the early assembly proteins it binds 23S rRNA. One of the proteins that surrounds the polypeptide exit tunnel on the outside of the ribosome. Forms the main docking site for trigger factor binding to the ribosome. The sequence is that of Large ribosomal subunit protein uL23 from Chlorobium phaeobacteroides (strain DSM 266 / SMG 266 / 2430).